A 202-amino-acid chain; its full sequence is LexA repressor (202 aa).

The H-T-H motif DNA-binding region spans 27-47 (RAEIAAELGFRSANAAEEHLR). Active-site for autocatalytic cleavage activity residues include Ser119 and Lys156.

The protein belongs to the peptidase S24 family. Homodimer.

It carries out the reaction Hydrolysis of Ala-|-Gly bond in repressor LexA.. Its function is as follows. Represses a number of genes involved in the response to DNA damage (SOS response), including recA and lexA. In the presence of single-stranded DNA, RecA interacts with LexA causing an autocatalytic cleavage which disrupts the DNA-binding part of LexA, leading to derepression of the SOS regulon and eventually DNA repair. This is LexA repressor from Marinobacter nauticus (strain ATCC 700491 / DSM 11845 / VT8) (Marinobacter aquaeolei).